The following is a 510-amino-acid chain: Transcriptional regulatory protein GAT1 (510 aa).

The residue at position 167 (Ser-167) is a Phosphoserine. Residues 220 to 256 (NHSHNSSHNNNSPSIANNTNANTNTNTSASTNTNSPL) are compositionally biased toward low complexity. 2 disordered regions span residues 220-311 (NHSH…IKCS) and 358-383 (QRSSTKINNNITPPPSSSLNPGAAGK). Phosphoserine is present on residues Ser-262 and Ser-270. The segment covering 274–287 (SSVRKKKPALKKIK) has biased composition (basic residues). Residues 294–306 (SSATPPSNTSSNP) are compositionally biased toward low complexity. The GATA-type zinc finger occupies 310–334 (CSNCTTSTTPLWRKDPKGLPLCNAC). At Thr-369 the chain carries Phosphothreonine. A phosphoserine mark is found at Ser-399 and Ser-418.

The protein resides in the nucleus. In terms of biological role, positive regulator of multiple nitrogen catabolic genes. The sequence is that of Transcriptional regulatory protein GAT1 (GAT1) from Saccharomyces cerevisiae (strain ATCC 204508 / S288c) (Baker's yeast).